Here is a 416-residue protein sequence, read N- to C-terminus: Peptide chain release factor subunit 1 (416 aa).

The protein belongs to the eukaryotic release factor 1 family. As to quaternary structure, heterodimer of two subunits, one of which binds GTP.

It localises to the cytoplasm. Functionally, directs the termination of nascent peptide synthesis (translation) in response to the termination codons UAA, UAG and UGA. The protein is Peptide chain release factor subunit 1 of Haloquadratum walsbyi (strain DSM 16790 / HBSQ001).